The chain runs to 835 residues: Ubiquitin carboxyl-terminal hydrolase 26 (835 aa).

The segment at 102–128 (SQGSIRPARSDERCGEPSTSAQELNGS) is disordered. Positions 118-128 (PSTSAQELNGS) are enriched in polar residues. The 531-residue stretch at 286–816 (QGLPNVGNTC…TGYVFFYMHN (531 aa)) folds into the USP domain. Residue Cys295 is the Nucleophile of the active site. The interval 597 to 747 (NRESEAQSGK…TRKVDPTKLN (151 aa)) is disordered. Basic and acidic residues-rich tracts occupy residues 634–652 (LTKE…RPSD) and 669–679 (KCNEGRSDKQI). The segment covering 683-708 (ALTQSRPKPISQEQTENLGKTTLSHT) has biased composition (polar residues). Positions 709–725 (QDSSQSSQSSSDSSKSS) are enriched in low complexity. The span at 726 to 747 (RCSDDLDKKAKPTRKVDPTKLN) shows a compositional bias: basic and acidic residues. His771 (proton acceptor) is an active-site residue.

It belongs to the peptidase C19 family. In terms of assembly, interacts with RING1.

It is found in the nucleus. It localises to the cytoplasm. The protein localises to the cytoskeleton. The protein resides in the flagellum axoneme. The catalysed reaction is Thiol-dependent hydrolysis of ester, thioester, amide, peptide and isopeptide bonds formed by the C-terminal Gly of ubiquitin (a 76-residue protein attached to proteins as an intracellular targeting signal).. In terms of biological role, deubiquitinase regulating several biological processes through the deubiquitination of components of these processes. Involved in somatic cell reprogramming through the 'Lys-48'-linked deubiquitination and stabilization of CBX4 and CBX6, two components of the polycomb-repressive complex 1 (PRC1). Also deubiquitinates and probably stabilizes the androgen receptor (AR), regulating the androgen receptor signaling pathway. May play a role in spermatogenesis. The sequence is that of Ubiquitin carboxyl-terminal hydrolase 26 from Mus musculus (Mouse).